The primary structure comprises 309 residues: Glutaminase (309 aa).

Positions 64, 114, 160, 167, 191, 243, and 261 each coordinate substrate.

This sequence belongs to the glutaminase family. Homotetramer.

It catalyses the reaction L-glutamine + H2O = L-glutamate + NH4(+). This is Glutaminase from Methylobacterium radiotolerans (strain ATCC 27329 / DSM 1819 / JCM 2831 / NBRC 15690 / NCIMB 10815 / 0-1).